A 579-amino-acid chain; its full sequence is MSTASAASSSSSSSAGEMIEAPSQVLNFEEIDYKEIEVEEVVGRGAFGVVCKAKWRAKDVAIKQIESESERKAFIVELRQLSRVNHPNIVKLYGACLNPVCLVMEYAEGGSLYNVLHGAEPLPYYTAAHAMSWCLQCSQGVAYLHSMQPKALIHRDLKPPNLLLVAGGTVLKICDFGTACDIQTHMTNNKGSAAWMAPEVFEGSNYSEKCDVFSWGIILWEVITRRKPFDEIGGPAFRIMWAVHNGTRPPLIKNLPKPIESLMTRCWSKDPSQRPSMEEIVKIMTHLMRYFPGADEPLQYPCQYSDEGQSNSATSTGSFMDITSTNTSNKSDTNMEQVPATNDTIKRLESKLLKNQAKQQSESGRLSLGASRGSSVESLPPTSEGKRMSADMSEIEARIAATTGNGQPRRRSIQDLTVTGTDPGQVSSRSSSPSVRMITTSGPTSEKPARSHPWTPDDSTDTNGSDNSIPMAYLTLDHQLQPLAPCPNSKESMAVFEQHCKMAQEYMKVQTEIALLLQRKQELVAELDQDEKDQQNTSRLVQEHKKLLDENKSLSTYYQQCKKQLEVIRSQQQKRQGTS.

The tract at residues 1-300 (MSTASAASSS…FPGADEPLQY (300 aa)) is interaction with MAPK8IP1. The Protein kinase domain maps to 36-291 (IEVEEVVGRG…KIMTHLMRYF (256 aa)). ATP is bound by residues 42-50 (VGRGAFGVV) and Lys-63. Residue Lys-72 forms a Glycyl lysine isopeptide (Lys-Gly) (interchain with G-Cter in ubiquitin) linkage. Asp-156 serves as the catalytic Proton acceptor. Lys-158 is covalently cross-linked (Glycyl lysine isopeptide (Lys-Gly) (interchain with G-Cter in ubiquitin)). 2 positions are modified to phosphothreonine; by autocatalysis: Thr-184 and Thr-187. A Phosphoserine; by autocatalysis modification is found at Ser-192. A Glycyl lysine isopeptide (Lys-Gly) (interchain with G-Cter in ubiquitin) cross-link involves residue Lys-209. Disordered regions lie at residues 301 to 339 (PCQY…EQVP) and 354 to 391 (KNQA…MSAD). Polar residues predominate over residues 306–322 (DEGQSNSATSTGSFMDI). Low complexity-rich tracts occupy residues 323–334 (TSTNTSNKSDTN) and 361–375 (SESG…RGSS). Ser-367, Ser-389, and Ser-412 each carry phosphoserine. A compositionally biased stretch (polar residues) spans 416-425 (LTVTGTDPGQ). The disordered stretch occupies residues 416 to 466 (LTVTGTDPGQVSSRSSSPSVRMITTSGPTSEKPARSHPWTPDDSTDTNGSD). Positions 426–436 (VSSRSSSPSVR) are enriched in low complexity. The residue at position 428 (Ser-428) is a Phosphoserine.

It belongs to the protein kinase superfamily. STE Ser/Thr protein kinase family. MAP kinase kinase kinase subfamily. Can form homodimer. Binds both upstream activators and downstream substrates in multimolecular complexes. Interacts with TAB1/MAP3K7IP1, TAB2/MAP3K7IP2 and TAB3/MAP3K7IP3. Identified in the TRIKA2 complex composed of MAP3K7/TAK1, TAB1/MAP3K7IP1 and TAB2/MAP3K7IP2. Interacts with PPM1L and PPM1B/PP2CB. Interaction with PP2A and PPP6C leads to its repressed activity. Interacts with TRAF6 and TAB1/MAP3K7IP1; during IL-1 signaling. Interacts with TAOK1 and TAOK2; interaction with TAOK2 interferes with MAP3K7 interaction with IKKA, thus preventing NF-kappa-B activation. Interacts with DYNC2I2 (via WD domains). Interacts with CYLD and RBCK1. Interacts with TGFBR1; induces MAP3K7/TAK1 activation by TRAF6. Interacts with MAPK8IP1 and SMAD6. Interacts with isoform 1 of VRK2. Interacts with DAB2; the interaction is induced by TGF-beta stimulation and may mediate TGF-beta stimulated JNK activation. Interacts with TRIM5. Part of a complex containing ITCH, NDFIP1 and MAP3K7. Interacts with IFIT5; the interaction synergizes the recruitment of IKK to MAP3K7 and enhances IKK phosphorylation. Interacts with PLEKHM1 (via N- and C-terminus). Found in a complex with SH3RF1, RAC2, MAP2K7/MKK7, MAPK8IP1/JIP1, MAPK8/JNK1 and MAPK9/JNK2. Interacts with SASH1. Interacts with RIPK1. Mg(2+) serves as cofactor. Post-translationally, association with TAB1/MAP3K7IP1 promotes autophosphorylation at Ser-192 and subsequent activation. Association with TAB2/MAP3K7IP2, itself associated with free unanchored Lys-63 polyubiquitin chain, promotes autophosphorylation and subsequent activation of MAP3K7. Dephosphorylation at Ser-192 by PPM1B/PP2CB and at Thr-187 by PP2A and PPP6C leads to inactivation. 'Lys-48'-linked polyubiquitination at Lys-72 is induced by TNFalpha, and leads to proteasomal degradation. Undergoes 'Lys-48'-linked polyubiquitination catalyzed by ITCH. 'Lys-63'-linked polyubiquitination at Lys-158 by TRIM8 does not lead to proteasomal degradation but contributes to autophosphorylation and activation. Deubiquitinated by CYLD, a protease that selectively cleaves 'Lys-63'-linked ubiquitin chains. Deubiquitinated by USP19; leading to negative regulation of TNF-alpha- and IL-1beta-triggered NF-kappa-B activation.

It localises to the cytoplasm. Its subcellular location is the cell membrane. It catalyses the reaction L-seryl-[protein] + ATP = O-phospho-L-seryl-[protein] + ADP + H(+). The catalysed reaction is L-threonyl-[protein] + ATP = O-phospho-L-threonyl-[protein] + ADP + H(+). With respect to regulation, activated by pro-inflammatory cytokines and in response to physical and chemical stresses, including osmotic stress, oxidative stress, arsenic and ultraviolet light irradiation. Activated by 'Lys-63'-linked polyubiquitination and by autophosphorylation. Association with TAB1/MAP3K7IP1 and TAB2/MAP3K7IP2 promotes activation through autophosphorylation, whereas PPM1B/PP2CB, PP2A and PPP6C dephosphorylation leads to inactivation. Ceramides are also able to activate MAP3K7/TAK1. Functionally, serine/threonine kinase which acts as an essential component of the MAP kinase signal transduction pathway. Plays an important role in the cascades of cellular responses evoked by changes in the environment. Mediates signal transduction of TRAF6, various cytokines including interleukin-1 (IL-1), transforming growth factor-beta (TGFB), TGFB-related factors like BMP2 and BMP4, toll-like receptors (TLR), tumor necrosis factor receptor CD40 and B-cell receptor (BCR). Once activated, acts as an upstream activator of the MKK/JNK signal transduction cascade and the p38 MAPK signal transduction cascade through the phosphorylation and activation of several MAP kinase kinases like MAP2K1/MEK1, MAP2K3/MKK3, MAP2K6/MKK6 and MAP2K7/MKK7. These MAP2Ks in turn activate p38 MAPKs and c-jun N-terminal kinases (JNKs); both p38 MAPK and JNK pathways control the transcription factors activator protein-1 (AP-1). Independently of MAP2Ks and p38 MAPKs, acts as a key activator of NF-kappa-B by promoting activation of the I-kappa-B-kinase (IKK) core complex. Mechanistically, recruited to polyubiquitin chains of RIPK2 and IKBKG/NEMO via TAB2/MAP3K7IP2 and TAB3/MAP3K7IP3, and catalyzes phosphorylation and activation of IKBKB/IKKB component of the IKK complex, leading to NF-kappa-B activation. In osmotic stress signaling, plays a major role in the activation of MAPK8/JNK1, but not that of NF-kappa-B. Promotes TRIM5 capsid-specific restriction activity. Phosphorylates RIPK1 at 'Ser-321' which positively regulates RIPK1 interaction with RIPK3 to promote necroptosis but negatively regulates RIPK1 kinase activity and its interaction with FADD to mediate apoptosis. Phosphorylates STING1 in response to cGAMP-activation, promoting association between STEEP1 and STING1 and STING1 translocation to COPII vesicles. The chain is Mitogen-activated protein kinase kinase kinase 7 (MAP3K7) from Bos taurus (Bovine).